A 151-amino-acid chain; its full sequence is Deoxyuridine 5'-triphosphate nucleotidohydrolase (151 aa).

Residues 69–71 (RSG), Asn82, 86–88 (LID), and Met96 each bind substrate.

It belongs to the dUTPase family. It depends on Mg(2+) as a cofactor.

The catalysed reaction is dUTP + H2O = dUMP + diphosphate + H(+). It functions in the pathway pyrimidine metabolism; dUMP biosynthesis; dUMP from dCTP (dUTP route): step 2/2. Its function is as follows. This enzyme is involved in nucleotide metabolism: it produces dUMP, the immediate precursor of thymidine nucleotides and it decreases the intracellular concentration of dUTP so that uracil cannot be incorporated into DNA. In Blochmanniella floridana, this protein is Deoxyuridine 5'-triphosphate nucleotidohydrolase.